A 146-amino-acid chain; its full sequence is 3-dehydroquinate dehydratase (146 aa).

Tyrosine 23 functions as the Proton acceptor in the catalytic mechanism. Residues asparagine 74, histidine 80, and aspartate 87 each contribute to the substrate site. The active-site Proton donor is histidine 100. Substrate is bound by residues 101–102 (IS) and arginine 111.

It belongs to the type-II 3-dehydroquinase family. As to quaternary structure, homododecamer.

It carries out the reaction 3-dehydroquinate = 3-dehydroshikimate + H2O. The protein operates within metabolic intermediate biosynthesis; chorismate biosynthesis; chorismate from D-erythrose 4-phosphate and phosphoenolpyruvate: step 3/7. Its function is as follows. Catalyzes a trans-dehydration via an enolate intermediate. In Bacillus cytotoxicus (strain DSM 22905 / CIP 110041 / 391-98 / NVH 391-98), this protein is 3-dehydroquinate dehydratase.